The primary structure comprises 343 residues: Flavone 3'-O-methyltransferase OMT1 (343 aa).

Residue Asn107 participates in (E)-ferulate binding. Residues Gly184, Asp207, Asp227, Met228, Met240, and Lys241 each contribute to the S-adenosyl-L-homocysteine site. His245 serves as the catalytic Proton acceptor. Asp246 contacts (E)-5-hydroxyferulate. Residues Glu273 and Glu305 contribute to the active site.

It belongs to the class I-like SAM-binding methyltransferase superfamily. Cation-independent O-methyltransferase family. COMT subfamily. Homodimer.

The catalysed reaction is (E)-5-hydroxyferulate + S-adenosyl-L-methionine = (E)-sinapate + S-adenosyl-L-homocysteine + H(+). It catalyses the reaction luteolin + S-adenosyl-L-methionine = chrysoeriol + S-adenosyl-L-homocysteine + H(+). It carries out the reaction quercetin + S-adenosyl-L-methionine = isorhamnetin + S-adenosyl-L-homocysteine + H(+). The enzyme catalyses (E)-caffeate + S-adenosyl-L-methionine = (E)-ferulate + S-adenosyl-L-homocysteine + H(+). The catalysed reaction is a 3'-hydroxyflavone + S-adenosyl-L-methionine = a 3'-methoxyflavone + S-adenosyl-L-homocysteine + H(+). Its pathway is flavonoid metabolism. Functionally, catalyzes the 3'-O-methylation of the flavonoids luteolin and quercetin. Catalyzes the 3- of 5-O-methylation of the phenylpropanoids caffeate and 5-hydroxyferulate. Substrate preference is 5-hydroxyferulate &gt; luteolin &gt; quercetin &gt; caffeate. Apigenin, kempferol and 3,4-dimethylquercetin do not seem to be substrates for methylation. This Chrysosplenium americanum (American golden saxifrage) protein is Flavone 3'-O-methyltransferase OMT1.